The following is a 330-amino-acid chain: Ketol-acid reductoisomerase (NADP(+)) (330 aa).

Residues 1–181 form the KARI N-terminal Rossmann domain; sequence MKVFYDSDFK…GLSRAGVIQT (181 aa). Residues 24–27, Arg47, Ser52, and 82–85 contribute to the NADP(+) site; these read YGSQ and DELQ. His107 is a catalytic residue. Position 133 (Gly133) interacts with NADP(+). The region spanning 182 to 327 is the KARI C-terminal knotted domain; it reads TFKEETETDL…AKLRKMCGLE (146 aa). 4 residues coordinate Mg(2+): Asp190, Glu194, Glu226, and Glu230. Ser251 is a substrate binding site.

Belongs to the ketol-acid reductoisomerase family. Mg(2+) serves as cofactor.

The catalysed reaction is (2R)-2,3-dihydroxy-3-methylbutanoate + NADP(+) = (2S)-2-acetolactate + NADPH + H(+). It catalyses the reaction (2R,3R)-2,3-dihydroxy-3-methylpentanoate + NADP(+) = (S)-2-ethyl-2-hydroxy-3-oxobutanoate + NADPH + H(+). It participates in amino-acid biosynthesis; L-isoleucine biosynthesis; L-isoleucine from 2-oxobutanoate: step 2/4. Its pathway is amino-acid biosynthesis; L-valine biosynthesis; L-valine from pyruvate: step 2/4. Involved in the biosynthesis of branched-chain amino acids (BCAA). Catalyzes an alkyl-migration followed by a ketol-acid reduction of (S)-2-acetolactate (S2AL) to yield (R)-2,3-dihydroxy-isovalerate. In the isomerase reaction, S2AL is rearranged via a Mg-dependent methyl migration to produce 3-hydroxy-3-methyl-2-ketobutyrate (HMKB). In the reductase reaction, this 2-ketoacid undergoes a metal-dependent reduction by NADPH to yield (R)-2,3-dihydroxy-isovalerate. This is Ketol-acid reductoisomerase (NADP(+)) from Methanococcus maripaludis (strain C5 / ATCC BAA-1333).